Here is a 548-residue protein sequence, read N- to C-terminus: Ankyrin repeat domain-containing protein SOWAHA (548 aa).

The N-terminal stretch at 1–19 (MALAAAAAAAAAAAGVSQA) is a signal peptide. The interval 114–212 (EDNCAPGAPH…PPTAQVPPQK (99 aa)) is disordered. Polar residues predominate over residues 136-153 (SAPSELQHTPETLPSEVT). Residues 198 to 212 (GPEPAPPTAQVPPQK) are compositionally biased toward pro residues. Ser258 carries the post-translational modification Phosphoserine. ANK repeat units follow at residues 344 to 373 (SGFTALHWAAKNGDREMALQLVEVARRGGA) and 383 to 413 (GGYTPLHLAALHGHEDAAVLLVVRLGAQVHV). Residues 512–548 (PRKKTKIRGGLPSFTEISHRSTPGPLAGLVPSLPPPT) form a disordered region.

This sequence belongs to the SOWAH family.

The sequence is that of Ankyrin repeat domain-containing protein SOWAHA (Sowaha) from Mus musculus (Mouse).